Reading from the N-terminus, the 245-residue chain is Transmembrane protein 116 (245 aa).

The next 4 membrane-spanning stretches (helical) occupy residues 24–44, 88–108, 141–161, and 173–195; these read MAFV…FCLG, GIAI…VLLI, FYPV…IIKL, and LYVL…YGWT.

It is found in the membrane. The sequence is that of Transmembrane protein 116 (TMEM116) from Homo sapiens (Human).